The sequence spans 380 residues: Erythronate-4-phosphate dehydrogenase (380 aa).

Substrate-binding residues include Ser45 and Thr66. Cys65 and Cys90 are disulfide-bonded. Residues 126-127 (QV), Asp146, Thr175, 206-208 (ASR), and Asp232 each bind NAD(+). The active site involves Arg208. The active site involves Glu237. The active-site Proton donor is the His254. Position 257 (Gly257) interacts with NAD(+). Tyr258 lines the substrate pocket.

The protein belongs to the D-isomer specific 2-hydroxyacid dehydrogenase family. PdxB subfamily. In terms of assembly, homodimer.

The protein resides in the cytoplasm. The enzyme catalyses 4-phospho-D-erythronate + NAD(+) = (R)-3-hydroxy-2-oxo-4-phosphooxybutanoate + NADH + H(+). The protein operates within cofactor biosynthesis; pyridoxine 5'-phosphate biosynthesis; pyridoxine 5'-phosphate from D-erythrose 4-phosphate: step 2/5. Its function is as follows. Catalyzes the oxidation of erythronate-4-phosphate to 3-hydroxy-2-oxo-4-phosphonooxybutanoate. The protein is Erythronate-4-phosphate dehydrogenase of Pseudomonas aeruginosa (strain ATCC 15692 / DSM 22644 / CIP 104116 / JCM 14847 / LMG 12228 / 1C / PRS 101 / PAO1).